The chain runs to 112 residues: Putative transmembrane protein ORF112 (112 aa).

3 helical membrane passes run 26–46 (FWEVICIYYFALQGSFLGILV), 50–70 (ILVTTLPLLPPALFFYLMYLF), and 80–100 (IFFPSLDPILIPILIFFLVGV).

Its subcellular location is the host membrane. The protein is Putative transmembrane protein ORF112 of Acidianus convivator (ABV).